Reading from the N-terminus, the 564-residue chain is Probable metalloprotease ARX1 (564 aa).

This sequence belongs to the peptidase M24 family. As to quaternary structure, component of the nucleoplasmic and cytoplasmic pre-60S ribosomal particles.

It localises to the cytoplasm. Its subcellular location is the nucleus. In terms of biological role, probable metalloprotease involved in proper assembly of pre-ribosomal particles during the biogenesis of the 60S ribosomal subunit. Accompanies the pre-60S particles to the cytoplasm. The protein is Probable metalloprotease ARX1 (ARX1) of Candida albicans (strain SC5314 / ATCC MYA-2876) (Yeast).